The sequence spans 623 residues: uncharacterized protein (623 aa).

A run of 5 helical transmembrane segments spans residues 242-262 (IVLALTILALLLGLRKLITWL), 288-308 (IVSPVSVFLALFSCDVALDIF), 318-338 (VSMWVGAVYIMLLAWLVIALF), 361-381 (VINLILKVVYFLIFIVALLGV), and 387-407 (FNVSAIIASLGIGGLAVALAV).

It belongs to the MscS (TC 1.A.23) family.

The protein resides in the cell membrane. This is an uncharacterized protein from Helicobacter pylori (strain ATCC 700392 / 26695) (Campylobacter pylori).